The chain runs to 715 residues: Probable serine/threonine-protein kinase MARK-B (715 aa).

Residues Ser-24 to Ser-37 are compositionally biased toward low complexity. A disordered region spans residues Ser-24–Tyr-65. A Protein kinase domain is found at Tyr-65–Val-320. ATP is bound by residues Ile-71–Val-79 and Lys-94. Catalysis depends on Asp-187, which acts as the Proton acceptor. The segment covering Lys-335–Gln-344 has biased composition (basic and acidic residues). Disordered stretches follow at residues Lys-335 to Asn-399 and Cys-446 to Thr-530. Over residues Gln-345 to Ser-368 the composition is skewed to low complexity. A compositionally biased stretch (polar residues) spans Ile-381–Asn-399. Composition is skewed to low complexity over residues Ser-451–Ser-478 and Ser-487–Ser-513. The segment covering Gln-517–His-527 has biased composition (basic residues). The KA1 domain occupies Leu-666–Leu-715.

Belongs to the protein kinase superfamily. CAMK Ser/Thr protein kinase family. SNF1 subfamily.

The catalysed reaction is L-seryl-[protein] + ATP = O-phospho-L-seryl-[protein] + ADP + H(+). It carries out the reaction L-threonyl-[protein] + ATP = O-phospho-L-threonyl-[protein] + ADP + H(+). The protein is Probable serine/threonine-protein kinase MARK-B (mrkB) of Dictyostelium discoideum (Social amoeba).